We begin with the raw amino-acid sequence, 155 residues long: Ribosome maturation factor RimP (155 aa).

The protein belongs to the RimP family.

It is found in the cytoplasm. Its function is as follows. Required for maturation of 30S ribosomal subunits. This chain is Ribosome maturation factor RimP, found in Parabacteroides distasonis (strain ATCC 8503 / DSM 20701 / CIP 104284 / JCM 5825 / NCTC 11152).